The sequence spans 153 residues: Transcriptional repressor NrdR (153 aa).

The interval 1 to 20 (MKCPFCNSADTRVKNSRHSD) is disordered. A zinc finger spans residues 3 to 34 (CPFCNSADTRVKNSRHSDDNMSVRRRRLCEVC). Residues 11–20 (TRVKNSRHSD) show a composition bias toward basic and acidic residues. In terms of domain architecture, ATP-cone spans 49 to 139 (IMVLKKDGRM…VYMDFSDADD (91 aa)).

This sequence belongs to the NrdR family. It depends on Zn(2+) as a cofactor.

Negatively regulates transcription of bacterial ribonucleotide reductase nrd genes and operons by binding to NrdR-boxes. This chain is Transcriptional repressor NrdR, found in Anaplasma phagocytophilum (strain HZ).